A 346-amino-acid chain; its full sequence is N-acetyl-gamma-glutamyl-phosphate reductase (346 aa).

Cysteine 150 is a catalytic residue.

Belongs to the NAGSA dehydrogenase family. Type 1 subfamily.

It localises to the cytoplasm. It carries out the reaction N-acetyl-L-glutamate 5-semialdehyde + phosphate + NADP(+) = N-acetyl-L-glutamyl 5-phosphate + NADPH + H(+). Its pathway is amino-acid biosynthesis; L-arginine biosynthesis; N(2)-acetyl-L-ornithine from L-glutamate: step 3/4. In terms of biological role, catalyzes the NADPH-dependent reduction of N-acetyl-5-glutamyl phosphate to yield N-acetyl-L-glutamate 5-semialdehyde. This Alkaliphilus metalliredigens (strain QYMF) protein is N-acetyl-gamma-glutamyl-phosphate reductase.